Consider the following 157-residue polypeptide: Selenoprotein F (157 aa).

The first 19 residues, Met1 to Ala19, serve as a signal peptide directing secretion. A non-standard amino acid (selenocysteine) is located at residue Sec84.

This sequence belongs to the selenoprotein M/F family. As to expression, expressed in the brain, liver and retina. Localized to the retinal ganglion cell layer, the inner nuclear layer and the outer nuclear layer at both parr and smolt stages.

The protein localises to the endoplasmic reticulum lumen. May be involved in redox reactions associated with the formation of disulfide bonds. May contribute to the quality control of protein folding in the endoplasmic reticulum. May be involved in retinal development. This is Selenoprotein F from Oncorhynchus mykiss (Rainbow trout).